The primary structure comprises 174 residues: Protein C (174 aa).

It belongs to the morbillivirus protein C family.

This chain is Protein C (P/V/C), found in Canine distemper virus (strain Onderstepoort) (CDV).